Reading from the N-terminus, the 360-residue chain is WD repeat domain phosphoinositide-interacting protein 4 (360 aa).

WD repeat units follow at residues 1–34 (MTQQPLRGVTSLRFNQDQSCFCCAMETGVRIYNV), 40–84 (KGHL…IWDD), 92–128 (KEKLVLEFTFTKPVLSVRMRHDKIVIVLKNRIYVYSF), 133–174 (RKLF…LVDL), 183–222 (SAPFTINAHQSDIACVSLNQPGTVVASASQKGTLIRLFDT), 227–266 (KLVELRRGTDPATLYCINFSHDSSFLCASSDKGTVHIFAL), and 284–329 (GPMI…ICVD). The L/FRRG motif signature appears at 231 to 234 (LRRG).

It belongs to the WD repeat PROPPIN family. As to quaternary structure, interacts with WIPI1. Interacts with WIPI2. Interacts with ATG2A and ATG2B. Interacts with ULK1. May interact with the PRKAA1, PRKAA2, PRKAB1 and PRKAG1 subunits of the AMPK kinase. May interact with NUDC. As to expression, ubiquitously expressed, with high expression in skeletal muscle and heart. Weakly expressed in liver and placenta. Expression is down-regulated in pancreatic and in kidney tumors.

It localises to the preautophagosomal structure. The protein resides in the cytoplasm. With respect to regulation, activated upon amino-acid starvation. Its function is as follows. Component of the autophagy machinery that controls the major intracellular degradation process by which cytoplasmic materials are packaged into autophagosomes and delivered to lysosomes for degradation. Binds phosphatidylinositol 3-phosphate (PtdIns3P). Activated by the STK11/AMPK signaling pathway upon starvation, WDR45 is involved in autophagosome assembly downstream of WIPI2, regulating the size of forming autophagosomes. Together with WIPI1, promotes ATG2 (ATG2A or ATG2B)-mediated lipid transfer by enhancing ATG2-association with phosphatidylinositol 3-monophosphate (PI3P)-containing membranes. Probably recruited to membranes through its PtdIns3P activity. In Homo sapiens (Human), this protein is WD repeat domain phosphoinositide-interacting protein 4 (WDR45).